The chain runs to 291 residues: Ribose-phosphate pyrophosphokinase (291 aa).

ATP is bound by residues 34–36 (DGE) and 93–94 (RQ). Mg(2+) contacts are provided by H127 and D165. K188 is an active-site residue. Residues R190, D216, and 220-224 (STGGT) contribute to the D-ribose 5-phosphate site.

It belongs to the ribose-phosphate pyrophosphokinase family. Class III (archaeal) subfamily. It depends on Mg(2+) as a cofactor.

The protein localises to the cytoplasm. The catalysed reaction is D-ribose 5-phosphate + ATP = 5-phospho-alpha-D-ribose 1-diphosphate + AMP + H(+). It functions in the pathway metabolic intermediate biosynthesis; 5-phospho-alpha-D-ribose 1-diphosphate biosynthesis; 5-phospho-alpha-D-ribose 1-diphosphate from D-ribose 5-phosphate (route I): step 1/1. Its function is as follows. Involved in the biosynthesis of the central metabolite phospho-alpha-D-ribosyl-1-pyrophosphate (PRPP) via the transfer of pyrophosphoryl group from ATP to 1-hydroxyl of ribose-5-phosphate (Rib-5-P). This is Ribose-phosphate pyrophosphokinase from Sulfurisphaera tokodaii (strain DSM 16993 / JCM 10545 / NBRC 100140 / 7) (Sulfolobus tokodaii).